A 130-amino-acid chain; its full sequence is Large ribosomal subunit protein bL19 (130 aa).

The protein belongs to the bacterial ribosomal protein bL19 family.

This protein is located at the 30S-50S ribosomal subunit interface and may play a role in the structure and function of the aminoacyl-tRNA binding site. The protein is Large ribosomal subunit protein bL19 of Cupriavidus metallidurans (strain ATCC 43123 / DSM 2839 / NBRC 102507 / CH34) (Ralstonia metallidurans).